Consider the following 90-residue polypeptide: MSVERQWYLYLLECTGGSIYTGITTDVARRFAQHQAGKGAKYTRSRKPLRVLGQVAFPSKSEALKAELATKRMSSAQKIAFCAKLEQPET.

Residues 5–80 enclose the GIY-YIG domain; the sequence is RQWYLYLLEC…KRMSSAQKIA (76 aa).

It belongs to the UPF0213 family.

The protein is UPF0213 protein Reut_B5558 of Cupriavidus pinatubonensis (strain JMP 134 / LMG 1197) (Cupriavidus necator (strain JMP 134)).